An 86-amino-acid polypeptide reads, in one-letter code: Large ribosomal subunit protein uL23 (86 aa).

The protein belongs to the universal ribosomal protein uL23 family. As to quaternary structure, part of the 50S ribosomal subunit. Contacts protein L29.

In terms of biological role, binds to 23S rRNA. One of the proteins that surrounds the polypeptide exit tunnel on the outside of the ribosome. The protein is Large ribosomal subunit protein uL23 of Thermococcus sibiricus (strain DSM 12597 / MM 739).